Consider the following 255-residue polypeptide: Dehydrogenase/reductase SDR family member 11 (255 aa).

The N-terminal stretch at 1 to 25 (MERWRDRLALVTGASGGIGAAVARA) is a signal peptide. Residues 13 to 18 (GASGGI), 38 to 39 (RT), Glu-44, 65 to 66 (DL), and Asn-92 each bind NADP(+). The substrate site is built by Ser-146 and Tyr-161. NADP(+) is bound by residues Tyr-161, Lys-165, 196–199 (VETQ), and Lys-203. Tyr-161 functions as the Proton acceptor in the catalytic mechanism.

This sequence belongs to the short-chain dehydrogenases/reductases (SDR) family.

It localises to the secreted. It carries out the reaction a 3beta-hydroxysteroid + NADP(+) = a 3-oxosteroid + NADPH + H(+). The catalysed reaction is 17beta-estradiol + NAD(+) = estrone + NADH + H(+). It catalyses the reaction 17beta-estradiol + NADP(+) = estrone + NADPH + H(+). It participates in steroid biosynthesis; estrogen biosynthesis. Its activity is regulated as follows. Inhibited by flavonoids including apigenin, luteolin, genistein, kaempferol and quercetin and also by carbenoxolone, zearalenone, glycyrrhetinic, curcumin and flufenamic acid. Its function is as follows. Catalyzes the conversion of the 17-keto group of estrone, 4- and 5-androstenes and 5-alpha-androstanes into their 17-beta-hydroxyl metabolites and the conversion of the 3-keto group of 3-, 3,17- and 3,20- diketosteroids into their 3-hydroxyl metabolites. Exhibits reductive 3-beta-hydroxysteroid dehydrogenase activity toward 5-beta-androstanes, 5-beta-pregnanes, 4-pregnenes and bile acids. May also reduce endogenous and exogenous alpha-dicarbonyl compounds and xenobiotic alicyclic ketones. The polypeptide is Dehydrogenase/reductase SDR family member 11 (DHRS11) (Bos taurus (Bovine)).